A 458-amino-acid polypeptide reads, in one-letter code: tRNA modification GTPase MnmE (458 aa).

Positions 26, 88, and 127 each coordinate (6S)-5-formyl-5,6,7,8-tetrahydrofolate. Residues G224–F378 form the TrmE-type G domain. A K(+)-binding site is contributed by N234. GTP contacts are provided by residues N234 to S239, T253 to T259, and D278 to G281. Mg(2+) is bound at residue S238. Residues T253, I255, and T258 each contribute to the K(+) site. Mg(2+) is bound at residue T259. K458 is a (6S)-5-formyl-5,6,7,8-tetrahydrofolate binding site.

The protein belongs to the TRAFAC class TrmE-Era-EngA-EngB-Septin-like GTPase superfamily. TrmE GTPase family. Homodimer. Heterotetramer of two MnmE and two MnmG subunits. The cofactor is K(+).

The protein localises to the cytoplasm. In terms of biological role, exhibits a very high intrinsic GTPase hydrolysis rate. Involved in the addition of a carboxymethylaminomethyl (cmnm) group at the wobble position (U34) of certain tRNAs, forming tRNA-cmnm(5)s(2)U34. This is tRNA modification GTPase MnmE from Streptococcus pyogenes serotype M1.